The chain runs to 505 residues: ATP synthase subunit alpha, chloroplastic (505 aa).

170 to 177 provides a ligand contact to ATP; the sequence is GDRQTGKT.

It belongs to the ATPase alpha/beta chains family. In terms of assembly, F-type ATPases have 2 components, CF(1) - the catalytic core - and CF(0) - the membrane proton channel. CF(1) has five subunits: alpha(3), beta(3), gamma(1), delta(1), epsilon(1). CF(0) has four main subunits: a, b, b' and c.

The protein resides in the plastid. It is found in the chloroplast thylakoid membrane. It catalyses the reaction ATP + H2O + 4 H(+)(in) = ADP + phosphate + 5 H(+)(out). Produces ATP from ADP in the presence of a proton gradient across the membrane. The alpha chain is a regulatory subunit. This chain is ATP synthase subunit alpha, chloroplastic, found in Oenothera biennis (German evening primrose).